Reading from the N-terminus, the 279-residue chain is Putative biopolymer transport protein ExbB homolog (279 aa).

Helical transmembrane passes span 19 to 39 (SGGV…ITAL), 126 to 146 (IIEV…WYTF), and 162 to 182 (IYVA…LMPL).

This sequence belongs to the ExbB/TolQ family.

It localises to the cell membrane. This Methanothermobacter thermautotrophicus (strain ATCC 29096 / DSM 1053 / JCM 10044 / NBRC 100330 / Delta H) (Methanobacterium thermoautotrophicum) protein is Putative biopolymer transport protein ExbB homolog.